Here is a 147-residue protein sequence, read N- to C-terminus: UPF0178 protein VIBHAR_03247 (147 aa).

The protein belongs to the UPF0178 family.

The chain is UPF0178 protein VIBHAR_03247 from Vibrio campbellii (strain ATCC BAA-1116).